Here is a 141-residue protein sequence, read N- to C-terminus: Large ribosomal subunit protein uL16 (141 aa).

Basic residues predominate over residues 1 to 19 (MLMPKKTKYRKQQKGRNRG). The interval 1–22 (MLMPKKTKYRKQQKGRNRGKAY) is disordered.

This sequence belongs to the universal ribosomal protein uL16 family. In terms of assembly, part of the 50S ribosomal subunit.

Its function is as follows. Binds 23S rRNA and is also seen to make contacts with the A and possibly P site tRNAs. The protein is Large ribosomal subunit protein uL16 of Nitratiruptor sp. (strain SB155-2).